The sequence spans 188 residues: Protein CRIPTO3 (188 aa).

Residues 78–107 (LNRTCCLNGGTCMLESFCACPPSFYGRNCE) form the EGF-like domain. Asn-79 carries an N-linked (GlcNAc...) asparagine glycan. 6 disulfides stabilise this stretch: Cys-82/Cys-89, Cys-83/Cys-95, Cys-97/Cys-106, Cys-115/Cys-133, Cys-128/Cys-149, and Cys-131/Cys-140.

It belongs to the EGF-CFC (Cripto-1/FRL1/Cryptic) family. As to expression, expressed weakly in lung, colon and breast. Expressed also strongly in primary cancer tissues; lung and colon cancers.

The protein localises to the cell membrane. In terms of biological role, could play a role in the determination of the epiblastic cells that subsequently give rise to the mesoderm. Activates the Nodal-dependent signaling pathway. This chain is Protein CRIPTO3, found in Homo sapiens (Human).